The sequence spans 304 residues: Deoxyribonuclease-1-like 1 (304 aa).

Residues 1–24 form the signal peptide; the sequence is MPYMAMHGLTVALLLIFLAGGTEA. An N-linked (GlcNAc...) asparagine glycan is attached at Asn92. The active site involves Glu103. An N-linked (GlcNAc...) asparagine glycan is attached at Asn123. His154 is an active-site residue. Cys193 and Cys230 form a disulfide bridge. Asn229 carries N-linked (GlcNAc...) asparagine glycosylation.

It belongs to the DNase I family.

The protein localises to the endoplasmic reticulum. This Cricetulus griseus (Chinese hamster) protein is Deoxyribonuclease-1-like 1 (DNASE1L1).